Reading from the N-terminus, the 240-residue chain is Carboxy-S-adenosyl-L-methionine synthase (240 aa).

S-adenosyl-L-methionine is bound by residues Y35, 61–63 (GCS), 86–87 (DN), 112–113 (DI), and R194.

Belongs to the class I-like SAM-binding methyltransferase superfamily. Cx-SAM synthase family. Homodimer.

The enzyme catalyses prephenate + S-adenosyl-L-methionine = carboxy-S-adenosyl-L-methionine + 3-phenylpyruvate + H2O. Catalyzes the conversion of S-adenosyl-L-methionine (SAM) to carboxy-S-adenosyl-L-methionine (Cx-SAM). The polypeptide is Carboxy-S-adenosyl-L-methionine synthase (Wolinella succinogenes (strain ATCC 29543 / DSM 1740 / CCUG 13145 / JCM 31913 / LMG 7466 / NCTC 11488 / FDC 602W) (Vibrio succinogenes)).